The primary structure comprises 142 residues: Hemoglobin subunit alpha (142 aa).

The region spanning 2-142 is the Globin domain; the sequence is VLSAADKTNV…LSTVLTSKYR (141 aa). Residue S4 is modified to Phosphoserine. Position 8 is an N6-succinyllysine (K8). Phosphothreonine is present on T9. K12 carries the post-translational modification N6-succinyllysine. K17 is modified (N6-acetyllysine; alternate). K17 carries the N6-succinyllysine; alternate modification. Y25 is modified (phosphotyrosine). The residue at position 36 (S36) is a Phosphoserine. The residue at position 41 (K41) is an N6-succinyllysine. Phosphoserine is present on S50. O2 is bound at residue Q59. H88 contacts heme b. Phosphothreonine is present on T109. The residue at position 125 (S125) is a Phosphoserine. Phosphothreonine is present on residues T135 and T138. S139 carries the post-translational modification Phosphoserine.

Belongs to the globin family. As to quaternary structure, heterotetramer of two alpha chains and two beta chains. Red blood cells.

Involved in oxygen transport from the lung to the various peripheral tissues. Its function is as follows. Hemopressin acts as an antagonist peptide of the cannabinoid receptor CNR1. Hemopressin-binding efficiently blocks cannabinoid receptor CNR1 and subsequent signaling. In Monodelphis domestica (Gray short-tailed opossum), this protein is Hemoglobin subunit alpha (HBA).